The chain runs to 406 residues: MFVQEEKIFAGKGLRLHICSLDGAEWLEEVTEEITVEKLKEKCLKHCSHGSLEDPKSLTHHKLVHASSERVLSDTKTLAEENLQDNDVLLLVKKRAPPPTPKMAEVSADEKRKQDQKAPDKDAILKATAGLPARSTDRTVAQHNMRDFQTELRKILVSLIEVAQKLLALNPDAIELFKKANAMLDEDDEDRVDEVALRQLTEMGFPESRAVKALRLNHMSVTQAMEWLIEHADDPAADAPLPCENSSEAAGGLATGEAETKPTLGAGAEDPKDELTEIFKKIRRKREFRPDPRAVIALMEMGFDEKEVIDALRVNNNQQDAACEWLLGDRKPSPEDLDKGIDTTSPLFQAILDNPVVQLGLTNPKTLLAFEDMLENPLNSTQWMNDPETGPVMLQISRIFQTLNRT.

Residues 14–98 enclose the Ubiquitin-like domain; the sequence is LRLHICSLDG…LLLVKKRAPP (85 aa). Residues 95–122 are disordered; sequence RAPPPTPKMAEVSADEKRKQDQKAPDKD. Basic and acidic residues predominate over residues 108–122; that stretch reads ADEKRKQDQKAPDKD. Residues 186 to 231 enclose the UBA 1 domain; the sequence is EDDEDRVDEVALRQLTEMGFPESRAVKALRLNHMSVTQAMEWLIEH. Residues 238–257 are compositionally biased toward low complexity; the sequence is DAPLPCENSSEAAGGLATGE. The tract at residues 238 to 272 is disordered; sequence DAPLPCENSSEAAGGLATGEAETKPTLGAGAEDPK. Residues 289-329 form the UBA 2 domain; sequence RPDPRAVIALMEMGFDEKEVIDALRVNNNQQDAACEWLLGD. The STI1 domain occupies 354–393; sequence NPVVQLGLTNPKTLLAFEDMLENPLNSTQWMNDPETGPVM.

In terms of assembly, component of the KPC complex.

It localises to the cytoplasm. The protein operates within protein modification; protein ubiquitination. Functionally, non-catalytic component of the KPC complex, a E3 ubiquitin-protein ligase complex that mediates polyubiquitination of target proteins, such as CDKN1B and NFKB1. Within the KPC complex, UBAC1 acts as an adapter that promotes the transfer of target proteins that have been polyubiquitinated by RNF123/KPC1 to the 26S proteasome. This is Ubiquitin-associated domain-containing protein 1 (ubac1) from Xenopus tropicalis (Western clawed frog).